We begin with the raw amino-acid sequence, 126 residues long: Aspartate 1-decarboxylase (126 aa).

The Schiff-base intermediate with substrate; via pyruvic acid role is filled by S25. The residue at position 25 (S25) is a Pyruvic acid (Ser). Residue T57 participates in substrate binding. Y58 functions as the Proton donor in the catalytic mechanism. 73–75 is a binding site for substrate; sequence GGA.

This sequence belongs to the PanD family. Heterooctamer of four alpha and four beta subunits. The cofactor is pyruvate. Is synthesized initially as an inactive proenzyme, which is activated by self-cleavage at a specific serine bond to produce a beta-subunit with a hydroxyl group at its C-terminus and an alpha-subunit with a pyruvoyl group at its N-terminus.

It is found in the cytoplasm. The catalysed reaction is L-aspartate + H(+) = beta-alanine + CO2. It participates in cofactor biosynthesis; (R)-pantothenate biosynthesis; beta-alanine from L-aspartate: step 1/1. In terms of biological role, catalyzes the pyruvoyl-dependent decarboxylation of aspartate to produce beta-alanine. The sequence is that of Aspartate 1-decarboxylase from Stenotrophomonas maltophilia (strain K279a).